Reading from the N-terminus, the 411-residue chain is Serine hydroxymethyltransferase (411 aa).

Residues Leu117 and 121–123 each bind (6S)-5,6,7,8-tetrahydrofolate; that span reads GHL. Position 226 is an N6-(pyridoxal phosphate)lysine (Lys226).

It belongs to the SHMT family. In terms of assembly, homodimer. Requires pyridoxal 5'-phosphate as cofactor.

Its subcellular location is the cytoplasm. It carries out the reaction (6R)-5,10-methylene-5,6,7,8-tetrahydrofolate + glycine + H2O = (6S)-5,6,7,8-tetrahydrofolate + L-serine. The protein operates within one-carbon metabolism; tetrahydrofolate interconversion. It functions in the pathway amino-acid biosynthesis; glycine biosynthesis; glycine from L-serine: step 1/1. Its function is as follows. Catalyzes the reversible interconversion of serine and glycine with tetrahydrofolate (THF) serving as the one-carbon carrier. This reaction serves as the major source of one-carbon groups required for the biosynthesis of purines, thymidylate, methionine, and other important biomolecules. Also exhibits THF-independent aldolase activity toward beta-hydroxyamino acids, producing glycine and aldehydes, via a retro-aldol mechanism. This Syntrophobacter fumaroxidans (strain DSM 10017 / MPOB) protein is Serine hydroxymethyltransferase.